The sequence spans 362 residues: MARMSLMIMMIMVAVTMINIAKSDPIAPCYFIFGDSLVDNGNNNQLQSLARANYFPYGIDFAAGPTGRFSNGLTTVDVIAQLLGFEDYITPYASARGQDILRGVNYASAAAGIRDETGRQLGGRIAFAGQVANHVNTVSQVVNILGDQNEASNYLSKCIYSIGLGSNDYLNNYFMPTFYSTGNQFSPESYADDLVARYTEQLRVLYTNGARKFALIGVGAIGCSPNELAQNSRDGRTCDERINSANRIFNSKLISIVDAFNQNTPDAKFTYINAYGIFQDIITNPARYGFRVTNAGCCGVGRNNGQITCLPGQAPCLNRNEYVFWDAFHPGEAANIVIGRRSFKREAASDAHPYDIQQLASL.

The signal sequence occupies residues 1–23 (MARMSLMIMMIMVAVTMINIAKS). S36 serves as the catalytic Nucleophile. Catalysis depends on residues D326 and H329.

This sequence belongs to the 'GDSL' lipolytic enzyme family.

Its subcellular location is the secreted. This is GDSL esterase/lipase At5g45670 from Arabidopsis thaliana (Mouse-ear cress).